Here is a 705-residue protein sequence, read N- to C-terminus: Polyribonucleotide nucleotidyltransferase (705 aa).

Mg(2+)-binding residues include D486 and D492. Residues 553–612 (PRIYTMKINPEKIKDVIGKGGSVIRALTDETGTTIEIEDDGTIKIAATDGDKAKHAIRRI) form the KH domain. Residues 622–690 (GRIYAGKVTR…RQGRIRLSIK (69 aa)) enclose the S1 motif domain.

The protein belongs to the polyribonucleotide nucleotidyltransferase family. As to quaternary structure, component of the RNA degradosome, which is a multiprotein complex involved in RNA processing and mRNA degradation. Mg(2+) is required as a cofactor.

It is found in the cytoplasm. It catalyses the reaction RNA(n+1) + phosphate = RNA(n) + a ribonucleoside 5'-diphosphate. Functionally, involved in mRNA degradation. Catalyzes the phosphorolysis of single-stranded polyribonucleotides processively in the 3'- to 5'-direction. The protein is Polyribonucleotide nucleotidyltransferase of Yersinia pseudotuberculosis serotype O:3 (strain YPIII).